The primary structure comprises 379 residues: Cytochrome b (379 aa).

4 helical membrane-spanning segments follow: residues 33–53, 77–98, 113–133, and 178–198; these read FGSL…FLAM, WTIR…FIHV, WNVG…GYVL, and FFAL…IHLL. Residues histidine 83 and histidine 97 each coordinate heme b. 2 residues coordinate heme b: histidine 182 and histidine 196. Histidine 201 lines the a ubiquinone pocket. A run of 4 helical transmembrane segments spans residues 226–246, 288–308, 320–340, and 347–367; these read TKDF…ALFY, LGGV…PFLQ, LSQF…WIGG, and FINI…FIMP.

This sequence belongs to the cytochrome b family. As to quaternary structure, the cytochrome bc1 complex contains 11 subunits: 3 respiratory subunits (MT-CYB, CYC1 and UQCRFS1), 2 core proteins (UQCRC1 and UQCRC2) and 6 low-molecular weight proteins (UQCRH/QCR6, UQCRB/QCR7, UQCRQ/QCR8, UQCR10/QCR9, UQCR11/QCR10 and a cleavage product of UQCRFS1). This cytochrome bc1 complex then forms a dimer. Heme b is required as a cofactor.

The protein resides in the mitochondrion inner membrane. Its function is as follows. Component of the ubiquinol-cytochrome c reductase complex (complex III or cytochrome b-c1 complex) that is part of the mitochondrial respiratory chain. The b-c1 complex mediates electron transfer from ubiquinol to cytochrome c. Contributes to the generation of a proton gradient across the mitochondrial membrane that is then used for ATP synthesis. In Lepilemur ankaranensis (Ankarana sportive lemur), this protein is Cytochrome b (MT-CYB).